We begin with the raw amino-acid sequence, 360 residues long: Peptide chain release factor 1 (360 aa).

At Gln237 the chain carries N5-methylglutamine.

It belongs to the prokaryotic/mitochondrial release factor family. Post-translationally, methylated by PrmC. Methylation increases the termination efficiency of RF1.

Its subcellular location is the cytoplasm. Functionally, peptide chain release factor 1 directs the termination of translation in response to the peptide chain termination codons UAG and UAA. The polypeptide is Peptide chain release factor 1 (Saccharophagus degradans (strain 2-40 / ATCC 43961 / DSM 17024)).